Reading from the N-terminus, the 227-residue chain is ATP-dependent dethiobiotin synthetase BioD (227 aa).

Residue 13-18 coordinates ATP; sequence NIGKTV. T17 provides a ligand contact to Mg(2+). The active site involves K38. ATP-binding positions include D55 and 116–119; that span reads EGIG. Residues D55 and E116 each coordinate Mg(2+).

The protein belongs to the dethiobiotin synthetase family. Homodimer. The cofactor is Mg(2+).

It is found in the cytoplasm. It carries out the reaction (7R,8S)-7,8-diammoniononanoate + CO2 + ATP = (4R,5S)-dethiobiotin + ADP + phosphate + 3 H(+). It functions in the pathway cofactor biosynthesis; biotin biosynthesis; biotin from 7,8-diaminononanoate: step 1/2. In terms of biological role, catalyzes a mechanistically unusual reaction, the ATP-dependent insertion of CO2 between the N7 and N8 nitrogen atoms of 7,8-diaminopelargonic acid (DAPA, also called 7,8-diammoniononanoate) to form a ureido ring. This is ATP-dependent dethiobiotin synthetase BioD from Buchnera aphidicola subsp. Baizongia pistaciae (strain Bp).